The chain runs to 536 residues: B3 domain-containing protein Os03g0619800 (536 aa).

Positions 26–119 (MRCFLRRMAA…RYEVLILDSD (94 aa)) form a DNA-binding region, TF-B3 1. The interval 138–199 (DKTVDPVDSS…VEPQTPSGSD (62 aa)) is disordered. 2 stretches are compositionally biased toward low complexity: residues 145–160 (DSSGSSSNDTTQSSRS) and 171–183 (SSSEKSGEDSPSG). The segment at residues 231 to 330 (VAVMKKCNLQ…AFTVHLLQAE (100 aa)) is a DNA-binding region (TF-B3 2). Positions 335-396 (RDGTDVHKIG…SDGPSEPPYI (62 aa)) are disordered. The segment covering 344 to 355 (GSSQNKRNSKMA) has biased composition (polar residues). Over residues 372–382 (SNKHGVSHESL) the composition is skewed to basic and acidic residues. Positions 429 to 529 (ISKLAGSGGK…TMEVHIISNL (101 aa)) form a DNA-binding region, TF-B3 3.

It is found in the nucleus. This Oryza sativa subsp. japonica (Rice) protein is B3 domain-containing protein Os03g0619800.